Consider the following 51-residue polypeptide: Kunitz-like toxin PcKuz3 (51 aa).

3 disulfides stabilise this stretch: C1/C51, C10/C34, and C26/C47.

This sequence belongs to the venom Kunitz-type family. Sea anemone type 2 potassium channel toxin subfamily.

It is found in the secreted. Its subcellular location is the nematocyst. Potent toxin and weak serine protease inhibitor that displays activity on both trypsin and elastase. May act as a neurotoxin by blocking voltage-gated potassium channels (Kv1.1/KCNA1 and Kv1.2/KCNA2). Has a neuroprotective effect, since it suppress, at low concentration, the 6-hydroxydopamine-induced neurotoxicity on the locomotive behavior of zebrafish. In vivo, has strong reversible antilocomotor activity. In addition, it is lethal to zebrafish larvae at high doses. This chain is Kunitz-like toxin PcKuz3, found in Palythoa caribaeorum (White encrusting zoanthid coral).